The chain runs to 736 residues: Zinc finger MYND domain-containing protein 15 (736 aa).

2 disordered regions span residues 70–94 and 109–192; these read SLGQ…DEPP and LEDG…KNAE. Positions 110–123 are enriched in acidic residues; that stretch reads EDGEEGEEEEEDEE. Composition is skewed to basic and acidic residues over residues 124–135 and 165–185; these read HGERPGMEKVEP and ASRE…PEKR. Residues C307, C310, C322, C325, C331, C335, H349, and C353 each coordinate Zn(2+). The MYND-type zinc-finger motif lies at 307-353; it reads CHVCHKHSFEVKLTPCPQCSAVLYCGEACLQADWRRCPDDVSHRFWC. 2 disordered regions span residues 556 to 583 and 696 to 736; these read DGPE…GGRR and GGTV…RRRR. Residues 704–718 are compositionally biased toward pro residues; sequence GPAPRPPTPAAPPVP. The span at 719–736 shows a compositional bias: basic residues; it reads ARRRRGEKKAARGPRRRR.

In terms of assembly, interacts with HDAC1, HDAC3, HDAC6 and, to a lesser extent, with HDAC7. Testis-specific. Expressed in pachytene spermatocytes and all developing spermatids, but not in Sertoli, nor Leydig cells (at protein level).

It localises to the nucleus. It is found in the cytoplasm. Acts as a transcriptional repressor through interaction with histone deacetylases (HDACs). May regulate haploid genes important for spermiogenesis. In Mus musculus (Mouse), this protein is Zinc finger MYND domain-containing protein 15 (Zmynd15).